The sequence spans 151 residues: Transcriptional regulator MraZ (151 aa).

SpoVT-AbrB domains follow at residues 5-51 (AHEL…PVAE) and 81-124 (AEIL…GREQ).

This sequence belongs to the MraZ family. As to quaternary structure, forms oligomers.

Its subcellular location is the cytoplasm. It localises to the nucleoid. The protein is Transcriptional regulator MraZ of Neisseria meningitidis serogroup C / serotype 2a (strain ATCC 700532 / DSM 15464 / FAM18).